A 443-amino-acid chain; its full sequence is MSGFNKNQIYWGDYVGVIAAFVGVYTELVARIFIYMIPERVREWFRVRIIVLYHYYISSKTTDGMTDAVQKCRNIYEICEAFGYRVEEHLVRTQDNFILCLHRITHPKQSQHKREVVYCHHGLMTNSELWVAVNESERSLPFVLIESGYDVWLGNNRGNKYSRKHITYKPKDEEFWNFSLDDMAMFDIPDTVDYILRETGREKLNYIGFSQGTAQAMAALSINPDLNDKVNIFIGLAPAYAPKGFSNYFVDYIVKVNPKIMYHLFGRRCLLPSVTFWQNICYPPIFVKIVDVSLKILFNWDLSNISLNQKLCGYAHLYSFSSVKSVVHWLQIIKNCTFQLYDDDMALLAGYGSRHYQVPLFPTNNIKCPMLILWGGKDTLINMEVMRTALPPHAKEVSIAHYEHLDFLWGQDVKEEVFPVVIDALKHHSLGKAKHFVKQNGFH.

The Cytoplasmic portion of the chain corresponds to 1–16; sequence MSGFNKNQIYWGDYVG. Residues 17-37 form a helical; Signal-anchor for type II membrane protein membrane-spanning segment; sequence VIAAFVGVYTELVARIFIYMI. At 38–443 the chain is on the lumenal side; it reads PERVREWFRV…KHFVKQNGFH (406 aa). The region spanning 116–410 is the AB hydrolase-1 domain; that stretch reads VVYCHHGLMT…HYEHLDFLWG (295 aa). N134 and N177 each carry an N-linked (GlcNAc...) asparagine glycan. S210 (nucleophile) is an active-site residue. 2 N-linked (GlcNAc...) asparagine glycosylation sites follow: N304 and N335. Residues D378 and H404 each act as charge relay system in the active site.

Belongs to the AB hydrolase superfamily. Lipase family.

It is found in the cytoplasm. It localises to the vacuole. Its subcellular location is the membrane. In terms of biological role, probable lipase. The protein is Probable lipase C16A3.12c of Schizosaccharomyces pombe (strain 972 / ATCC 24843) (Fission yeast).